A 124-amino-acid polypeptide reads, in one-letter code: Ribonuclease pancreatic (124 aa).

Residues 1–13 (SETAAEKFERQHM) show a composition bias toward basic and acidic residues. A disordered region spans residues 1 to 23 (SETAAEKFERQHMDSYSSSSSNS). Residues Lys-7 and Arg-10 each contribute to the substrate site. His-12 serves as the catalytic Proton acceptor. 4 disulfides stabilise this stretch: Cys-26–Cys-84, Cys-40–Cys-95, Cys-58–Cys-110, and Cys-65–Cys-72. Residues 41-45 (KPVNT), Lys-66, and Arg-85 contribute to the substrate site. His-119 functions as the Proton donor in the catalytic mechanism.

Belongs to the pancreatic ribonuclease family. Monomer. Interacts with and forms tight 1:1 complexes with RNH1. Dimerization of two such complexes may occur. Interaction with RNH1 inhibits this protein. In terms of tissue distribution, pancreas.

Its subcellular location is the secreted. It carries out the reaction an [RNA] containing cytidine + H2O = an [RNA]-3'-cytidine-3'-phosphate + a 5'-hydroxy-ribonucleotide-3'-[RNA].. The enzyme catalyses an [RNA] containing uridine + H2O = an [RNA]-3'-uridine-3'-phosphate + a 5'-hydroxy-ribonucleotide-3'-[RNA].. Functionally, endonuclease that catalyzes the cleavage of RNA on the 3' side of pyrimidine nucleotides. Acts on single-stranded and double-stranded RNA. This is Ribonuclease pancreatic (RNASE1) from Camelus dromedarius (Dromedary).